The following is a 463-amino-acid chain: ATP synthase subunit beta (463 aa).

An ATP-binding site is contributed by 152–159 (GGAGVGKT).

Belongs to the ATPase alpha/beta chains family. As to quaternary structure, F-type ATPases have 2 components, CF(1) - the catalytic core - and CF(0) - the membrane proton channel. CF(1) has five subunits: alpha(3), beta(3), gamma(1), delta(1), epsilon(1). CF(0) has three main subunits: a(1), b(2) and c(9-12). The alpha and beta chains form an alternating ring which encloses part of the gamma chain. CF(1) is attached to CF(0) by a central stalk formed by the gamma and epsilon chains, while a peripheral stalk is formed by the delta and b chains.

Its subcellular location is the cell inner membrane. It catalyses the reaction ATP + H2O + 4 H(+)(in) = ADP + phosphate + 5 H(+)(out). In terms of biological role, produces ATP from ADP in the presence of a proton gradient across the membrane. The catalytic sites are hosted primarily by the beta subunits. The polypeptide is ATP synthase subunit beta (Shewanella sp. (strain ANA-3)).